A 68-amino-acid polypeptide reads, in one-letter code: DNA-directed RNA polymerase subunit omega (68 aa).

This sequence belongs to the RNA polymerase subunit omega family. The RNAP catalytic core consists of 2 alpha, 1 beta, 1 beta' and 1 omega subunit. When a sigma factor is associated with the core the holoenzyme is formed, which can initiate transcription.

The catalysed reaction is RNA(n) + a ribonucleoside 5'-triphosphate = RNA(n+1) + diphosphate. In terms of biological role, promotes RNA polymerase assembly. Latches the N- and C-terminal regions of the beta' subunit thereby facilitating its interaction with the beta and alpha subunits. The sequence is that of DNA-directed RNA polymerase subunit omega from Geobacter sp. (strain M21).